Here is a 316-residue protein sequence, read N- to C-terminus: Phospho-N-acetylmuramoyl-pentapeptide-transferase (316 aa).

10 helical membrane passes run 5-25 (IIFA…FFIP), 52-72 (TMGG…FSPW), 76-96 (LFIL…DDFL), 116-136 (FLLA…EIIV), 145-165 (LANF…NSVN), 172-192 (GLAA…ALFL), 195-212 (VTYG…LGFL), 221-241 (VFMG…VALL), 244-264 (LPLI…SVIL), and 296-316 (VVYS…YSLS).

Belongs to the glycosyltransferase 4 family. MraY subfamily. Requires Mg(2+) as cofactor.

The protein localises to the cell membrane. The catalysed reaction is UDP-N-acetyl-alpha-D-muramoyl-L-alanyl-gamma-D-glutamyl-meso-2,6-diaminopimeloyl-D-alanyl-D-alanine + di-trans,octa-cis-undecaprenyl phosphate = di-trans,octa-cis-undecaprenyl diphospho-N-acetyl-alpha-D-muramoyl-L-alanyl-D-glutamyl-meso-2,6-diaminopimeloyl-D-alanyl-D-alanine + UMP. It participates in cell wall biogenesis; peptidoglycan biosynthesis. Its function is as follows. Catalyzes the initial step of the lipid cycle reactions in the biosynthesis of the cell wall peptidoglycan: transfers peptidoglycan precursor phospho-MurNAc-pentapeptide from UDP-MurNAc-pentapeptide onto the lipid carrier undecaprenyl phosphate, yielding undecaprenyl-pyrophosphoryl-MurNAc-pentapeptide, known as lipid I. In Caldanaerobacter subterraneus subsp. tengcongensis (strain DSM 15242 / JCM 11007 / NBRC 100824 / MB4) (Thermoanaerobacter tengcongensis), this protein is Phospho-N-acetylmuramoyl-pentapeptide-transferase.